Reading from the N-terminus, the 924-residue chain is Lipoxygenase 7, chloroplastic (924 aa).

Residues 1 to 61 constitute a chloroplast transit peptide; the sequence is MLRPQLNPSS…GQGSSRVVVV (61 aa). Residues 88-218 enclose the PLAT domain; sequence AVATIKVTVG…VGDEGTPSKR (131 aa). Residues 225 to 924 enclose the Lipoxygenase domain; that stretch reads TYLPGQTPAG…GMGIPNSTSI (700 aa). The segment at 231-315 is disordered; it reads TPAGLRSYRK…PKSETRKGNV (85 aa). 2 stretches are compositionally biased toward basic and acidic residues: residues 239–262 and 302–315; these read RKND…RVYD and SKKD…KGNV. The Fe cation site is built by H581, H586, H773, N777, and I924.

It belongs to the lipoxygenase family. Fe cation serves as cofactor.

Its subcellular location is the plastid. It is found in the chloroplast. The catalysed reaction is (9Z,12Z)-octadecadienoate + O2 = (13S)-hydroperoxy-(9Z,11E)-octadecadienoate. It carries out the reaction (9Z,12Z,15Z)-octadecatrienoate + O2 = (13S)-hydroperoxy-(9Z,11E,15Z)-octadecatrienoate. It functions in the pathway lipid metabolism; oxylipin biosynthesis. Its function is as follows. Plant lipoxygenase may be involved in a number of diverse aspects of plant physiology including growth and development, pest resistance, and senescence or responses to wounding. This lipoxygenase introduces molecular oxygen exclusively into the C-13 position of linoleic and linolenic acids. In Oryza sativa subsp. japonica (Rice), this protein is Lipoxygenase 7, chloroplastic (CM-LOX1).